The following is a 228-amino-acid chain: Ribonuclease 3 (228 aa).

An RNase III domain is found at 5 to 128 (LNRLMARLGY…IIGAMLLDGG (124 aa)). Residue Glu41 participates in Mg(2+) binding. Residue Asp45 is part of the active site. Residues Asp114 and Glu117 each coordinate Mg(2+). The active site involves Glu117. One can recognise a DRBM domain in the interval 155–225 (DAKTRLQEWL…ASLALEWLEQ (71 aa)).

Belongs to the ribonuclease III family. In terms of assembly, homodimer. Mg(2+) serves as cofactor.

It localises to the cytoplasm. The catalysed reaction is Endonucleolytic cleavage to 5'-phosphomonoester.. In terms of biological role, digests double-stranded RNA. Involved in the processing of primary rRNA transcript to yield the immediate precursors to the large and small rRNAs (23S and 16S). Processes some mRNAs, and tRNAs when they are encoded in the rRNA operon. Processes pre-crRNA and tracrRNA of type II CRISPR loci if present in the organism. This is Ribonuclease 3 from Alcanivorax borkumensis (strain ATCC 700651 / DSM 11573 / NCIMB 13689 / SK2).